The primary structure comprises 98 residues: Small ribosomal subunit protein bS6 (98 aa).

Belongs to the bacterial ribosomal protein bS6 family.

In terms of biological role, binds together with bS18 to 16S ribosomal RNA. The sequence is that of Small ribosomal subunit protein bS6 from Lactobacillus helveticus (strain DPC 4571).